The following is a 350-amino-acid chain: Adenine deaminase (350 aa).

Zn(2+) contacts are provided by H24, H26, and H207. E210 acts as the Proton donor in catalysis. D288 lines the Zn(2+) pocket. D289 is a substrate binding site.

Belongs to the metallo-dependent hydrolases superfamily. Adenosine and AMP deaminases family. Adenine deaminase type 2 subfamily. Zn(2+) serves as cofactor.

It catalyses the reaction adenine + H2O + H(+) = hypoxanthine + NH4(+). Its function is as follows. Catalyzes the hydrolytic deamination of adenine to hypoxanthine. Plays an important role in the purine salvage pathway and in nitrogen catabolism. The protein is Adenine deaminase of Paraburkholderia phytofirmans (strain DSM 17436 / LMG 22146 / PsJN) (Burkholderia phytofirmans).